Reading from the N-terminus, the 282-residue chain is Bifunctional protein FolD (282 aa).

NADP(+) is bound by residues 165–167 (GRS) and serine 190.

This sequence belongs to the tetrahydrofolate dehydrogenase/cyclohydrolase family. Homodimer.

It carries out the reaction (6R)-5,10-methylene-5,6,7,8-tetrahydrofolate + NADP(+) = (6R)-5,10-methenyltetrahydrofolate + NADPH. It catalyses the reaction (6R)-5,10-methenyltetrahydrofolate + H2O = (6R)-10-formyltetrahydrofolate + H(+). The protein operates within one-carbon metabolism; tetrahydrofolate interconversion. Functionally, catalyzes the oxidation of 5,10-methylenetetrahydrofolate to 5,10-methenyltetrahydrofolate and then the hydrolysis of 5,10-methenyltetrahydrofolate to 10-formyltetrahydrofolate. In Macrococcus caseolyticus (strain JCSC5402) (Macrococcoides caseolyticum), this protein is Bifunctional protein FolD.